Consider the following 441-residue polypeptide: Maltose-6'-phosphate glucosidase (441 aa).

4-70 (FSILIAGGGS…PQIKFSYSTN (67 aa)) serves as a coordination point for NAD(+). Substrate-binding residues include R93 and N147. A Mn(2+)-binding site is contributed by C169. The active-site Proton donor is D170. Residue H200 participates in Mn(2+) binding. The active-site Proton acceptor is Y264. Residue R284 participates in substrate binding.

The protein belongs to the glycosyl hydrolase 4 family. In terms of assembly, homotetramer. The cofactor is NAD(+). Requires Mn(2+) as cofactor. Fe(2+) serves as cofactor. It depends on Co(2+) as a cofactor. Ni(2+) is required as a cofactor.

The catalysed reaction is alpha-maltose 6'-phosphate + H2O = D-glucose 6-phosphate + D-glucose. It functions in the pathway glycan degradation; maltose degradation. Its function is as follows. Hydrolyzes a wide variety of 6-phospho-alpha-D-glucosides including maltose-6'P, trehalose-6P and the 6'-phosphorylated derivatives of the five linkage-isomeric alpha-D-glucosyl-D-fructoses: trehalulose-6'P, turanose-6'P, maltulose-6'P, leucrose-6'P, and palatinose-6'P. However, sucrose-6P is not a substrate for MalH, and this enzyme also fails to hydrolyze beta-O-linked phosphorylated disaccharides such as cellobiose-6'P and gentobiose-6'P. This Fusobacterium mortiferum protein is Maltose-6'-phosphate glucosidase (malH).